The primary structure comprises 78 residues: Large ribosomal subunit protein bL28 (78 aa).

Residues 1 to 20 (MSRVCQVTGKRPVTGNNRSH) are disordered.

This sequence belongs to the bacterial ribosomal protein bL28 family.

The protein is Large ribosomal subunit protein bL28 of Vibrio parahaemolyticus serotype O3:K6 (strain RIMD 2210633).